The primary structure comprises 523 residues: GMP synthase [glutamine-hydrolyzing] (523 aa).

Residues 18-208 (KILIVDFGGQ…LYNVCGAKGD (191 aa)) enclose the Glutamine amidotransferase type-1 domain. C95 functions as the Nucleophile in the catalytic mechanism. Residues H182 and E184 contribute to the active site. The 190-residue stretch at 209-398 (WNMKSFLAEA…LGLPDYLVHR (190 aa)) folds into the GMPS ATP-PPase domain. 236 to 242 (SGGVDSS) contributes to the ATP binding site.

In terms of assembly, homodimer.

The enzyme catalyses XMP + L-glutamine + ATP + H2O = GMP + L-glutamate + AMP + diphosphate + 2 H(+). It participates in purine metabolism; GMP biosynthesis; GMP from XMP (L-Gln route): step 1/1. In terms of biological role, catalyzes the synthesis of GMP from XMP. In Treponema denticola (strain ATCC 35405 / DSM 14222 / CIP 103919 / JCM 8153 / KCTC 15104), this protein is GMP synthase [glutamine-hydrolyzing].